The chain runs to 468 residues: MASNPKSDLLNCLSGSNVIVDGDEAWPDAIKRWTGYLGKIPAAVVQVTSEEDVIAAVSYAVQNQRPFVVRGGGHSNGFSTVDSPGIIIDLSRMRKVTVDVERQVVVAQGGATMGDGVKAASSVGMAVATGTCNEVGLIGATLGGGIGRLLGHVGYAADTVLSMRVVVVDQSGVARAVEASPDVNSDLFWGLRGSGHLFGVVVEATFRAYPWTHDTWHSCLVFPPSDAGLVAEAVEKVHYQGGMQGRLVFCAPNKQPIVLLQMWYMGSHEEAASKFQPLLELPSMTDHPLNFVGRRIPYPNLNDSSDRICGYGGRKNLAAFGLKNLSAGACVAALNVYMDFIVQHPEAAQTHVLTEFYSMDVARQLDQDGQETSIPGEFRREVKYWVMPLAWYDDPALDDACAGLNKAIREAFLTQHDGTRARGVGYVNMPFEDDTTTSVFGEGERLERLRNLKLKWDPLGVVQGIVKL.

The region spanning 37–211 (LGKIPAAVVQ…VEATFRAYPW (175 aa)) is the FAD-binding PCMH-type domain.

This sequence belongs to the oxygen-dependent FAD-linked oxidoreductase family. FAD is required as a cofactor.

The protein operates within secondary metabolite biosynthesis. FAD-linked oxidoreductase; part of the gene cluster that mediates the biosynthesis of hexadehydro-astechrome (HAS), a tryptophan-derived iron(III)-complex that acts as a virulence factor in infected mice. Within the pathway, hasG converts the prenyl to a methylbutadienyl side chain. The HAS biosynthesis begins with the synthesis of a tethered Trp-Ala dipeptide by the NRPS hasD. The 7-dimethylallyltryptophan synthase hasE then catalyzes the prenylation of the hasD-tethered tryptophan or the resulting tethered Trp-Ala dipeptide at the C-7 position of the indole moiety. HAS biosynthesis continues via tethered intermediates with the succesive actions of the cytochrome P450 monooxygenase hasH, the O-methyltransferase hasC, and the FAD-linked oxidoreductase hasG. The resulting O-methylated diketopiperazine is then released from hasD. Finally, three O-methylated diketopiperazine molecules assemble in a trimeric complex with Fe(III) to produce hexadehydro-astechrome. The protein is FAD-linked oxidoreductase hasG of Aspergillus fumigatus (strain CBS 144.89 / FGSC A1163 / CEA10) (Neosartorya fumigata).